Here is a 454-residue protein sequence, read N- to C-terminus: Membrane-bound lytic murein transglycosylase F (454 aa).

The signal sequence occupies residues 1-24 (MRRPLRRVTVVLLWVALAIGVAWF). The segment at 25-265 (YDYRRSMQSL…IYNRYYTAVD (241 aa)) is non-LT domain. Residues 266–454 (TFDYVDVKKF…YDILKQKKAV (189 aa)) form an LT domain region. Glu-311 is a catalytic residue.

In the N-terminal section; belongs to the bacterial solute-binding protein 3 family. The protein in the C-terminal section; belongs to the transglycosylase Slt family.

The protein localises to the cell outer membrane. The catalysed reaction is Exolytic cleavage of the (1-&gt;4)-beta-glycosidic linkage between N-acetylmuramic acid (MurNAc) and N-acetylglucosamine (GlcNAc) residues in peptidoglycan, from either the reducing or the non-reducing ends of the peptidoglycan chains, with concomitant formation of a 1,6-anhydrobond in the MurNAc residue.. Murein-degrading enzyme that degrades murein glycan strands and insoluble, high-molecular weight murein sacculi, with the concomitant formation of a 1,6-anhydromuramoyl product. Lytic transglycosylases (LTs) play an integral role in the metabolism of the peptidoglycan (PG) sacculus. Their lytic action creates space within the PG sacculus to allow for its expansion as well as for the insertion of various structures such as secretion systems and flagella. The sequence is that of Membrane-bound lytic murein transglycosylase F from Desulfosudis oleivorans (strain DSM 6200 / JCM 39069 / Hxd3) (Desulfococcus oleovorans).